A 153-amino-acid chain; its full sequence is Regulator of ribonuclease activity B (153 aa).

The tract at residues 114–153 (DPNADDDEYGDDGEFLDDEDEYGDDGEFFDDEDEEEPRVH) is disordered. The segment covering 115-153 (PNADDDEYGDDGEFLDDEDEYGDDGEFFDDEDEEEPRVH) has biased composition (acidic residues).

This sequence belongs to the RraB family. Interacts with the C-terminal region of Rne.

The protein resides in the cytoplasm. Its function is as follows. Globally modulates RNA abundance by binding to RNase E (Rne) and regulating its endonucleolytic activity. Can modulate Rne action in a substrate-dependent manner by altering the composition of the degradosome. The sequence is that of Regulator of ribonuclease activity B from Haemophilus influenzae (strain ATCC 51907 / DSM 11121 / KW20 / Rd).